A 110-amino-acid polypeptide reads, in one-letter code: Phosphoribosyl-ATP pyrophosphatase (110 aa).

This sequence belongs to the PRA-PH family.

It is found in the cytoplasm. The catalysed reaction is 1-(5-phospho-beta-D-ribosyl)-ATP + H2O = 1-(5-phospho-beta-D-ribosyl)-5'-AMP + diphosphate + H(+). It participates in amino-acid biosynthesis; L-histidine biosynthesis; L-histidine from 5-phospho-alpha-D-ribose 1-diphosphate: step 2/9. This chain is Phosphoribosyl-ATP pyrophosphatase, found in Pseudomonas fluorescens (strain ATCC BAA-477 / NRRL B-23932 / Pf-5).